The sequence spans 381 residues: Creatine kinase M-type (381 aa).

The 88-residue stretch at 11 to 98 folds into the Phosphagen kinase N-terminal domain; it reads KLNFKAEEEY…FDPIIQDRHG (88 aa). Residues 125–367 enclose the Phosphagen kinase C-terminal domain; that stretch reads YVLSSRVRTG…KLMVEMEKKL (243 aa). 128–132 provides a ligand contact to ATP; sequence SSRVR. Residue serine 164 is modified to Phosphoserine. Threonine 166 carries the post-translational modification Phosphothreonine. Phosphoserine is present on serine 178. Threonine 180 bears the Phosphothreonine mark. Histidine 191 is a binding site for ATP. Serine 199 is subject to Phosphoserine. Residues arginine 236 and arginine 292 each contribute to the ATP site. Phosphothreonine is present on residues threonine 313 and threonine 322. ATP-binding positions include 320–325 and aspartate 335; that span reads RGTGGV. Serine 372 is modified (phosphoserine).

This sequence belongs to the ATP:guanido phosphotransferase family. In terms of assembly, dimer of identical or non-identical chains, which can be either B (brain type) or M (muscle type). With MM being the major form in skeletal muscle and myocardium, MB existing in myocardium, and BB existing in many tissues, especially brain.

It localises to the cytoplasm. It catalyses the reaction creatine + ATP = N-phosphocreatine + ADP + H(+). In terms of biological role, reversibly catalyzes the transfer of phosphate between ATP and various phosphogens (e.g. creatine phosphate). Creatine kinase isoenzymes play a central role in energy transduction in tissues with large, fluctuating energy demands, such as skeletal muscle, heart, brain and spermatozoa. The chain is Creatine kinase M-type (CKM) from Bos taurus (Bovine).